The primary structure comprises 373 residues: Carboxylesterase/phospholipase LipF (373 aa).

The Involved in the stabilization of the negatively charged intermediate by the formation of the oxyanion hole signature appears at 116-118 (HGG). Active-site residues include S186, E285, and H315.

It belongs to the 'GDXG' lipolytic enzyme family.

It carries out the reaction a carboxylic ester + H2O = an alcohol + a carboxylate + H(+). It catalyses the reaction a 1,2-diacyl-sn-glycero-3-phosphocholine + H2O = phosphocholine + a 1,2-diacyl-sn-glycerol + H(+). A short-chain esterase and phospholipase. The sequence is that of Carboxylesterase/phospholipase LipF from Mycobacterium tuberculosis (strain CDC 1551 / Oshkosh).